Consider the following 280-residue polypeptide: UPF0273 protein SSO1861 (280 aa).

The KaiC domain occupies 2-246 (KRVKTYIPGL…YLKISNWSVS (245 aa)). 29 to 36 (GGPGTGKS) contacts ATP.

It belongs to the UPF0273 family.

The polypeptide is UPF0273 protein SSO1861 (Saccharolobus solfataricus (strain ATCC 35092 / DSM 1617 / JCM 11322 / P2) (Sulfolobus solfataricus)).